A 531-amino-acid chain; its full sequence is UDP-glucuronosyltransferase 1A3 (531 aa).

A signal peptide spans 1-25 (MGIQGFLQKLSGLLLLLCALPWAEG). N-linked (GlcNAc...) asparagine glycans are attached at residues Asn-116, Asn-139, Asn-293, and Asn-431. Residues 489-505 (VIGFLLAIVLTVVFIVY) form a helical membrane-spanning segment.

The protein belongs to the UDP-glycosyltransferase family. Homodimers. Homooligomer. Interacts with UGT1A1, UGT1A4, UGT1A6, UGT1A7, UGT1A8, UGT1A9 and UGT1A10 to form heterodimers.

It is found in the endoplasmic reticulum membrane. It carries out the reaction glucuronate acceptor + UDP-alpha-D-glucuronate = acceptor beta-D-glucuronoside + UDP + H(+). The enzyme catalyses 17beta-estradiol + UDP-alpha-D-glucuronate = 17beta-estradiol 3-O-(beta-D-glucuronate) + UDP + H(+). The catalysed reaction is 17beta-estradiol + UDP-alpha-D-glucuronate = 17beta-estradiol 17-O-(beta-D-glucuronate) + UDP + H(+). It catalyses the reaction 17alpha-estradiol + UDP-alpha-D-glucuronate = 17alpha-estradiol 3-O-(beta-D-glucuronate) + UDP + H(+). It carries out the reaction estrone + UDP-alpha-D-glucuronate = estrone 3-O-(beta-D-glucuronate) + UDP + H(+). The enzyme catalyses chenodeoxycholate + UDP-alpha-D-glucuronate = chenodeoxycholoyl-24-O-(beta-D-glucuronate) + UDP. The catalysed reaction is deoxycholate + UDP-alpha-D-glucuronate = deoxycholoyl-24-O-(beta-D-glucuronate) + UDP. It catalyses the reaction lithocholate + UDP-alpha-D-glucuronate = lithocholoyl-24-O-(beta-D-glucuronate) + UDP. It carries out the reaction hyodeoxycholate + UDP-alpha-D-glucuronate = hyodeoxycholoyl-24-O-(beta-D-glucuronate) + UDP. The enzyme catalyses hyocholate + UDP-alpha-D-glucuronate = hyocholoyl-24-O-(beta-D-glucuronate) + UDP. The catalysed reaction is calcidiol + UDP-alpha-D-glucuronate = calcidiol 25-O-(beta-D-glucuronide) + UDP + H(+). It catalyses the reaction losartan + UDP-alpha-D-glucuronate = losartan-2-N-beta-D-glucuronide + UDP. It carries out the reaction candesartan + UDP-alpha-D-glucuronate = candesartan-2-N-beta-D-glucuronide + UDP. The enzyme catalyses zolasartan + UDP-alpha-D-glucuronate = zolarsartan-2-N-beta-D-glucuronide + UDP. The catalysed reaction is (E)-ferulate + UDP-alpha-D-glucuronate = (E)-4-O-(beta-D-glucuronosyl)-ferulate + UDP + H(+). It catalyses the reaction (E)-ferulate + UDP-alpha-D-glucuronate = (E)-ferulic acid beta-D-glucuronate ester + UDP. Functionally, UDP-glucuronosyltransferase (UGT) that catalyzes phase II biotransformation reactions in which lipophilic substrates are conjugated with glucuronic acid to increase the metabolite's water solubility, thereby facilitating excretion into either the urine or bile. Essential for the elimination and detoxification of drugs, xenobiotics and endogenous compounds. Catalyzes the glucuronidation of endogenous estrogen hormones such as estradiol and estrone. Contributes to bile acid (BA) detoxification by catalyzing the glucuronidation of BA substrates, which are natural detergents for dietary lipids absorption. Involved in the glucuronidation of calcidiol, which is the major circulating form of vitamin D3, essential for the regulation of calcium and phosphate homeostasis. Involved in the glucuronidation of the phytochemical ferulic acid at the phenolic or the carboxylic acid group. Involved in the glucuronidation of the AGTR1 angiotensin receptor antagonists losartan, candesartan and zolarsartan, which can inhibit the effect of angiotensin II. The polypeptide is UDP-glucuronosyltransferase 1A3 (Rattus norvegicus (Rat)).